Consider the following 355-residue polypeptide: Uroporphyrinogen decarboxylase (355 aa).

Substrate-binding positions include 27 to 31 (RQAGR), D77, Y154, T209, and H327.

The protein belongs to the uroporphyrinogen decarboxylase family. Homodimer.

The protein localises to the cytoplasm. It catalyses the reaction uroporphyrinogen III + 4 H(+) = coproporphyrinogen III + 4 CO2. The protein operates within porphyrin-containing compound metabolism; protoporphyrin-IX biosynthesis; coproporphyrinogen-III from 5-aminolevulinate: step 4/4. In terms of biological role, catalyzes the decarboxylation of four acetate groups of uroporphyrinogen-III to yield coproporphyrinogen-III. In Yersinia pestis bv. Antiqua (strain Antiqua), this protein is Uroporphyrinogen decarboxylase.